Reading from the N-terminus, the 157-residue chain is Phosphopantetheine adenylyltransferase (157 aa).

Thr10 is a binding site for substrate. ATP contacts are provided by residues 10-11 (TF) and His18. Positions 42, 74, and 88 each coordinate substrate. Residues 89-91 (GLR), Glu99, and 124-130 (NAFISSS) contribute to the ATP site.

It belongs to the bacterial CoaD family. Homohexamer. Mg(2+) serves as cofactor.

It is found in the cytoplasm. It carries out the reaction (R)-4'-phosphopantetheine + ATP + H(+) = 3'-dephospho-CoA + diphosphate. It functions in the pathway cofactor biosynthesis; coenzyme A biosynthesis; CoA from (R)-pantothenate: step 4/5. With respect to regulation, tightly binds to CoA, which is presumably a feedback inhibitor. Potently inhibited by D-amethopterin, which simultaneously occupies the 4'-phosphopantetheine- and ATP-binding sites; following treatment with D-amethopterin, H.pylori exhibits morphological characteristics associated with cell death, showing that D-amethopterin displays antimicrobial activity. Reversibly transfers an adenylyl group from ATP to 4'-phosphopantetheine, yielding dephospho-CoA (dPCoA) and pyrophosphate. The polypeptide is Phosphopantetheine adenylyltransferase (Helicobacter pylori (strain ATCC 700392 / 26695) (Campylobacter pylori)).